The chain runs to 416 residues: Glutamyl-tRNA reductase (416 aa).

Substrate-binding positions include 49 to 52 (TCNR), S105, 110 to 112 (EPQ), and Q116. The active-site Nucleophile is C50. Residue 185 to 190 (GAGETI) participates in NADP(+) binding.

The protein belongs to the glutamyl-tRNA reductase family. Homodimer.

It catalyses the reaction (S)-4-amino-5-oxopentanoate + tRNA(Glu) + NADP(+) = L-glutamyl-tRNA(Glu) + NADPH + H(+). It functions in the pathway porphyrin-containing compound metabolism; protoporphyrin-IX biosynthesis; 5-aminolevulinate from L-glutamyl-tRNA(Glu): step 1/2. Catalyzes the NADPH-dependent reduction of glutamyl-tRNA(Glu) to glutamate 1-semialdehyde (GSA). The protein is Glutamyl-tRNA reductase of Shewanella halifaxensis (strain HAW-EB4).